The sequence spans 376 residues: UPF0754 membrane protein BH1148 (376 aa).

2 helical membrane-spanning segments follow: residues 3–23 (LILFMIVIGAVIGGVTNSLAI) and 355–375 (YLGALLGGGIGLVQSLIILLI).

The protein belongs to the UPF0754 family.

Its subcellular location is the cell membrane. This chain is UPF0754 membrane protein BH1148, found in Halalkalibacterium halodurans (strain ATCC BAA-125 / DSM 18197 / FERM 7344 / JCM 9153 / C-125) (Bacillus halodurans).